The primary structure comprises 112 residues: Cytochrome c (112 aa).

Positions 23, 26, 27, and 89 each coordinate heme c.

Belongs to the cytochrome c family. In terms of processing, binds 1 heme c group covalently per subunit.

The protein localises to the mitochondrion intermembrane space. Functionally, electron carrier protein. The oxidized form of the cytochrome c heme group can accept an electron from the heme group of the cytochrome c1 subunit of cytochrome reductase. Cytochrome c then transfers this electron to the cytochrome oxidase complex, the final protein carrier in the mitochondrial electron-transport chain. This is Cytochrome c (CYC1) from Chlamydomonas reinhardtii (Chlamydomonas smithii).